We begin with the raw amino-acid sequence, 207 residues long: Ribonuclease HII (207 aa).

One can recognise an RNase H type-2 domain in the interval 18 to 207; that stretch reads GLVAGVDEAG…VAEVLREALP (190 aa). A divalent metal cation-binding residues include aspartate 24, glutamate 25, and aspartate 116.

It belongs to the RNase HII family. Mn(2+) serves as cofactor. Mg(2+) is required as a cofactor.

The protein resides in the cytoplasm. It catalyses the reaction Endonucleolytic cleavage to 5'-phosphomonoester.. Functionally, endonuclease that specifically degrades the RNA of RNA-DNA hybrids. This Albidiferax ferrireducens (strain ATCC BAA-621 / DSM 15236 / T118) (Rhodoferax ferrireducens) protein is Ribonuclease HII.